Consider the following 465-residue polypeptide: Citrate synthase-like protein (465 aa).

A disordered region spans residues 13-40; that stretch reads HISDMVDSTKMNGNQSQDTAGRADTPVS. Polar residues predominate over residues 21-31; sequence TKMNGNQSQDT. Catalysis depends on residues His357 and Asp413.

This sequence belongs to the citrate synthase family.

Its pathway is secondary metabolite biosynthesis. Functionally, citrate synthase-like protein; part of the gene cluster that mediates the biosynthesis of squalestatin S1 (SQS1, also known as zaragozic acid A), a heavily oxidized fungal polyketide that offers potent cholesterol lowering activity by targeting squalene synthase (SS). SQS1 is composed of a 2,8-dioxobicyclic[3.2.1]octane-3,4,5-tricarboxyclic acid core that is connected to two lipophilic polyketide arms. These initial steps feature the priming of an unusual benzoic acid starter unit onto the highly reducing polyketide synthase pks2, followed by oxaloacetate extension and product release to generate a tricarboxylic acid containing product. The phenylalanine ammonia lyase (PAL) M7 and the acyl-CoA ligase M9 are involved in transforming phenylalanine into benzoyl-CoA. The citrate synthase-like protein R3 is involved in connecting the C-alpha-carbons of the hexaketide chain and oxaloacetate to afford the tricarboxylic acid unit. The potential hydrolytic enzymes, M8 and M10, are in close proximity to pks2 and may participate in product release. On the other side, the tetraketide arm is synthesized by a the squalestatin tetraketide synthase pks1 and enzymatically esterified to the core in the last biosynthetic step, by the acetyltransferase M4. The biosynthesis of the tetraketide must involve 3 rounds of chain extension. After the first and second rounds methyl-transfer occurs, and in all rounds of extension the ketoreductase and dehydratase are active. The enoyl reductase and C-MeT of pks1 are not active in the final round of extension. The acetyltransferase M4 appears to have a broad substrate selectivity for its acyl CoA substrate, allowing the in vitro synthesis of novel squalestatins. The biosynthesis of SQS1 requires several oxidative steps likely performed by oxidoreductases M1, R1 and R2. Finally, in support of the identification of the cluster as being responsible for SQS1 production, the cluster contains a gene encoding a putative squalene synthase (SS) R6, suggesting a likely mechanism for self-resistance. The protein is Citrate synthase-like protein of Phoma sp. (strain ATCC 20986 / MF5453).